The sequence spans 711 residues: Early transcription factor 82 kDa subunit (711 aa).

The protein belongs to the poxviridae VETF large subunit family. Heterodimer of a 70 kDa and a 82 kDa subunit. Part of the early transcription complex composed of ETF, RAP94, and the DNA-directed RNA polymerase.

Its function is as follows. Acts with RNA polymerase to initiate transcription from early gene promoters. Is recruited by the RPO-associated protein of 94 kDa (RAP94) to form the early transcription complex, which also contains the core RNA polymerase. ETF heterodimer binds to early gene promoters. The protein is Early transcription factor 82 kDa subunit (VETFL) of Oryctolagus cuniculus (Rabbit).